Consider the following 95-residue polypeptide: Aspartyl/glutamyl-tRNA(Asn/Gln) amidotransferase subunit C (95 aa).

It belongs to the GatC family. Heterotrimer of A, B and C subunits.

It carries out the reaction L-glutamyl-tRNA(Gln) + L-glutamine + ATP + H2O = L-glutaminyl-tRNA(Gln) + L-glutamate + ADP + phosphate + H(+). It catalyses the reaction L-aspartyl-tRNA(Asn) + L-glutamine + ATP + H2O = L-asparaginyl-tRNA(Asn) + L-glutamate + ADP + phosphate + 2 H(+). Its function is as follows. Allows the formation of correctly charged Asn-tRNA(Asn) or Gln-tRNA(Gln) through the transamidation of misacylated Asp-tRNA(Asn) or Glu-tRNA(Gln) in organisms which lack either or both of asparaginyl-tRNA or glutaminyl-tRNA synthetases. The reaction takes place in the presence of glutamine and ATP through an activated phospho-Asp-tRNA(Asn) or phospho-Glu-tRNA(Gln). The polypeptide is Aspartyl/glutamyl-tRNA(Asn/Gln) amidotransferase subunit C (Maricaulis maris (strain MCS10) (Caulobacter maris)).